The sequence spans 467 residues: Phytase A (467 aa).

Residues 1-23 (MGVSAVLLPLYLLAGVTSGLAVP) form the signal peptide. Asn27 carries an N-linked (GlcNAc...) asparagine glycan. Cys31 and Cys40 are oxidised to a cystine. 1D-myo-inositol hexakisphosphate is bound by residues Gln50 and Tyr51. The N-linked (GlcNAc...) asparagine glycan is linked to Asn59. 4 disulfides stabilise this stretch: Cys71/Cys414, Cys215/Cys465, Cys264/Cys282, and Cys436/Cys444. Positions 81, 82, 85, and 88 each coordinate 1D-myo-inositol hexakisphosphate. The active-site Nucleophile is the His82. 2 N-linked (GlcNAc...) asparagine glycosylation sites follow: Asn105 and Asn120. A 1D-myo-inositol hexakisphosphate-binding site is contributed by Arg165. 2 N-linked (GlcNAc...) asparagine glycosylation sites follow: Asn207 and Asn230. Lys301 lines the 1D-myo-inositol hexakisphosphate pocket. Asn339 and Asn352 each carry an N-linked (GlcNAc...) asparagine glycan. The 1D-myo-inositol hexakisphosphate site is built by His361 and Asp362. N-linked (GlcNAc...) asparagine glycans are attached at residues Asn376 and Asn388.

Belongs to the histidine acid phosphatase family. As to quaternary structure, monomer.

Its subcellular location is the secreted. The enzyme catalyses 1D-myo-inositol hexakisphosphate + H2O = 1D-myo-inositol 1,2,4,5,6-pentakisphosphate + phosphate. It catalyses the reaction 1D-myo-inositol 1,2,4,5,6-pentakisphosphate + H2O = 1D-myo-inositol 1,2,5,6-tetrakisphosphate + phosphate. The catalysed reaction is 1D-myo-inositol 1,2,5,6-tetrakisphosphate + H2O = 1D-myo-inositol 1,2,6-trisphosphate + phosphate. It carries out the reaction 1D-myo-inositol 1,2,6-trisphosphate + H2O = 1D-myo-inositol 1,2-bisphosphate + phosphate. The enzyme catalyses 1D-myo-inositol 1,2-bisphosphate + H2O = 1D-myo-inositol 2-phosphate + phosphate. Catalyzes the phosphate monoester hydrolysis of phytic acid (myo-inositol hexakisphosphate), which results in the stepwise formation of myo-inositol pentakis-, tetrakis-, tris-, bis-, and monophosphates, as well as the liberation of inorganic phosphate. Myo-inositol 2-monophosphate is the end product. The protein is Phytase A (phyA) of Aspergillus awamori (Black koji mold).